The following is a 117-amino-acid chain: Immunoglobulin kappa variable 1-39 (117 aa).

The signal sequence occupies residues 1 to 22 (MDMRVPAQLLGLLLLWLRGARC). The framework-1 stretch occupies residues 23–45 (DIQMTQSPSSLSASVGDRVTITC). Positions 24 to 117 (IQMTQSPSSL…YYCQQSYSTP (94 aa)) constitute an Ig-like domain. C45 and C110 form a disulfide bridge. Residues 46–56 (RASQSISSYLN) form a complementarity-determining-1 region. The framework-2 stretch occupies residues 57–71 (WYQQKPGKAPKLLIY). A complementarity-determining-2 region spans residues 72 to 78 (AASSLQS). Residues 79-110 (GVPSRFSGSGSGTDFTLTISSLQPEDFATYYC) form a framework-3 region. The interval 111–117 (QQSYSTP) is complementarity-determining-3.

As to quaternary structure, immunoglobulins are composed of two identical heavy chains and two identical light chains; disulfide-linked.

Its subcellular location is the secreted. The protein localises to the cell membrane. Its function is as follows. V region of the variable domain of immunoglobulin light chains that participates in the antigen recognition. Immunoglobulins, also known as antibodies, are membrane-bound or secreted glycoproteins produced by B lymphocytes. In the recognition phase of humoral immunity, the membrane-bound immunoglobulins serve as receptors which, upon binding of a specific antigen, trigger the clonal expansion and differentiation of B lymphocytes into immunoglobulins-secreting plasma cells. Secreted immunoglobulins mediate the effector phase of humoral immunity, which results in the elimination of bound antigens. The antigen binding site is formed by the variable domain of one heavy chain, together with that of its associated light chain. Thus, each immunoglobulin has two antigen binding sites with remarkable affinity for a particular antigen. The variable domains are assembled by a process called V-(D)-J rearrangement and can then be subjected to somatic hypermutations which, after exposure to antigen and selection, allow affinity maturation for a particular antigen. The sequence is that of Immunoglobulin kappa variable 1-39 from Homo sapiens (Human).